We begin with the raw amino-acid sequence, 291 residues long: Popeye domain-containing protein 3 (291 aa).

Asn4 carries an N-linked (GlcNAc...) asparagine glycan. 3 helical membrane-spanning segments follow: residues 27 to 44 (GAIYHLASILFVVGFMGG), 48 to 70 (FGLLYVFSLLGLGFLSSAVWAWV), and 77 to 99 (IFSWNFVLFVICFMQFVHIAYQV).

The protein belongs to the popeye family. Expressed in cardiac and skeletal muscle.

The protein resides in the membrane. Functionally, may play a role in the maintenance of heart function mediated, at least in part, through cAMP-binding. May play a role in the regulation of KCNK2-mediated current amplitude. This Mus musculus (Mouse) protein is Popeye domain-containing protein 3 (Popdc3).